A 776-amino-acid polypeptide reads, in one-letter code: Palmitoyltransferase AKR1 (776 aa).

Residues 1 to 311 (MDQEMTTVAS…MEGKLGPRNT (311 aa)) lie on the Cytoplasmic side of the membrane. Residues 38-58 (RLDEGSSIRGGELERDSQEVG) are disordered. 6 ANK repeats span residues 68–97 (CHDLDIHALAQRGDTAAIAAMLQENPSLNL), 103–132 (QDVTPLHWAAINAHMGTCRLLIDSGADIDA), 137–166 (LKATPLQWAARNGHLYVVHLLISRGADPNI), 170–199 (QGFNTLHLITHSSAVMPLLYMLHQPVAIDE), 203–232 (DGHTALMWAAYQGDALSVDLLIRHGASVNS), and 236–265 (AGMTPLHWAAVKGNKVSIMHLVEAGASLDA). Residues 312–332 (ILAIFLLPIAVLWLIFSTFKW) traverse the membrane as a helical segment. Residues 333–336 (LPVY) lie on the Lumenal side of the membrane. Residues 337–357 (VGVPFAIAEFMGMQYTVVLVL) traverse the membrane as a helical segment. The Cytoplasmic segment spans residues 358-368 (LGHIKAQDKVS). The chain crosses the membrane as a helical span at residues 369–389 (TSNYFASIITASLIWVGYCWI). Topologically, residues 390 to 402 (SRFAVNTPGYAFS) are lumenal. Residues 403-423 (NLGFIIMFVGCCWTFWTAIVT) form a helical membrane-spanning segment. Residues 424–498 (DPGFVPKGQQ…NCVGAKNHRS (75 aa)) lie on the Cytoplasmic side of the membrane. A DHHC domain is found at 454–504 (NFCIVCMARKPLRSKHCRTCNRCVARFDHHCPWIWNCVGAKNHRSFLLFVL). C484 functions as the S-palmitoyl cysteine intermediate in the catalytic mechanism. The helical transmembrane segment at 499 to 519 (FLLFVLFLIGGIILFIRLTIA) threads the bilayer. The Lumenal segment spans residues 520–553 (YIQQNAPEYIPTPNPGLTTCDISTTLCQAGDFDP). The helical transmembrane segment at 554-574 (FLLCMALWSTLQLTWTSVLAI) threads the bilayer. Topologically, residues 575–776 (SHLWQVSRQM…RYEVVSEQEV (202 aa)) are cytoplasmic. The disordered stretch occupies residues 628–665 (GAGEEAAGPPGAEAGPEGNALLPPPGGHVHGPQCRHGD). The segment covering 629 to 645 (AGEEAAGPPGAEAGPEG) has biased composition (low complexity).

Belongs to the DHHC palmitoyltransferase family. AKR/ZDHHC17 subfamily.

The protein localises to the early endosome membrane. Its subcellular location is the golgi apparatus membrane. The enzyme catalyses L-cysteinyl-[protein] + hexadecanoyl-CoA = S-hexadecanoyl-L-cysteinyl-[protein] + CoA. Palmitoyltransferase specific for casein kinase 1. In Cryptococcus neoformans var. neoformans serotype D (strain B-3501A) (Filobasidiella neoformans), this protein is Palmitoyltransferase AKR1 (AKR1).